We begin with the raw amino-acid sequence, 297 residues long: Protein-L-isoaspartate O-methyltransferase (297 aa).

The disordered stretch occupies residues 20-57; sequence RKPAPARTAGMPAVGAPGPAQAQAKARDKQPSAPTAAA. Positions 28–43 are enriched in low complexity; that stretch reads AGMPAVGAPGPAQAQA. Residue Ser-133 is part of the active site.

The protein belongs to the methyltransferase superfamily. L-isoaspartyl/D-aspartyl protein methyltransferase family.

Its subcellular location is the cytoplasm. It carries out the reaction [protein]-L-isoaspartate + S-adenosyl-L-methionine = [protein]-L-isoaspartate alpha-methyl ester + S-adenosyl-L-homocysteine. Its function is as follows. Catalyzes the methyl esterification of L-isoaspartyl residues in peptides and proteins that result from spontaneous decomposition of normal L-aspartyl and L-asparaginyl residues. It plays a role in the repair and/or degradation of damaged proteins. This is Protein-L-isoaspartate O-methyltransferase from Cupriavidus pinatubonensis (strain JMP 134 / LMG 1197) (Cupriavidus necator (strain JMP 134)).